The primary structure comprises 165 residues: Large ribosomal subunit protein uL10 (165 aa).

Belongs to the universal ribosomal protein uL10 family. In terms of assembly, part of the ribosomal stalk of the 50S ribosomal subunit. The N-terminus interacts with L11 and the large rRNA to form the base of the stalk. The C-terminus forms an elongated spine to which L12 dimers bind in a sequential fashion forming a multimeric L10(L12)X complex.

Its function is as follows. Forms part of the ribosomal stalk, playing a central role in the interaction of the ribosome with GTP-bound translation factors. The protein is Large ribosomal subunit protein uL10 of Shewanella halifaxensis (strain HAW-EB4).